The primary structure comprises 94 residues: Co-chaperonin GroES (94 aa).

Belongs to the GroES chaperonin family. As to quaternary structure, heptamer of 7 subunits arranged in a ring. Interacts with the chaperonin GroEL.

It localises to the cytoplasm. Together with the chaperonin GroEL, plays an essential role in assisting protein folding. The GroEL-GroES system forms a nano-cage that allows encapsulation of the non-native substrate proteins and provides a physical environment optimized to promote and accelerate protein folding. GroES binds to the apical surface of the GroEL ring, thereby capping the opening of the GroEL channel. This chain is Co-chaperonin GroES, found in Shouchella clausii (strain KSM-K16) (Alkalihalobacillus clausii).